The chain runs to 285 residues: Golgi phosphoprotein 3-like (285 aa).

The segment at 1–43 (MTTLTHRTRRTEVSKSSEKKIESEEDTNQERSPDNEDPGDSKD) is disordered. Residues 10 to 43 (RTEVSKSSEKKIESEEDTNQERSPDNEDPGDSKD) show a composition bias toward basic and acidic residues. A 1,2-diacyl-sn-glycero-3-phospho-(1D-myo-inositol 4-phosphate)-binding residues include Trp-67 and Arg-76. Ser-112 carries the post-translational modification Phosphoserine. A 1,2-diacyl-sn-glycero-3-phospho-(1D-myo-inositol 4-phosphate) contacts are provided by Arg-157 and Arg-160. The interval 176-187 (EKQNFLLFDMTT) is beta-hairpin required for oligomerization.

This sequence belongs to the GOLPH3/VPS74 family. As to quaternary structure, homooligomer. Does not interact MYO18; differs from GOLPH3 by its inability to interact with MYO18. May interact with ARF1. Expressed in a subset of tissues tested with higher expression in salivary gland, small intestine and skin (at protein level).

Its subcellular location is the golgi apparatus. The protein resides in the golgi stack membrane. It is found in the trans-Golgi network membrane. Its function is as follows. Phosphatidylinositol-4-phosphate-binding protein that may antagonize the action of GOLPH3 which is required for the process of vesicle budding at the Golgi and anterograde transport to the plasma membrane. This is Golgi phosphoprotein 3-like (Golph3l) from Mus musculus (Mouse).